The primary structure comprises 201 residues: Sec-independent protein translocase protein TatB (201 aa).

The helical transmembrane segment at 1 to 21 (MLDLGWSEILVIAVVLIVVVG) threads the bilayer. The interval 96-201 (LSEAAKAKPA…RRKKTAGTAP (106 aa)) is disordered. 2 stretches are compositionally biased toward low complexity: residues 102 to 114 (AKPA…AADS) and 159 to 187 (TSAK…APAK). Over residues 189–201 (PSPRRKKTAGTAP) the composition is skewed to basic residues.

The protein belongs to the TatB family. As to quaternary structure, the Tat system comprises two distinct complexes: a TatABC complex, containing multiple copies of TatA, TatB and TatC subunits, and a separate TatA complex, containing only TatA subunits. Substrates initially bind to the TatABC complex, which probably triggers association of the separate TatA complex to form the active translocon.

Its subcellular location is the cell inner membrane. Its function is as follows. Part of the twin-arginine translocation (Tat) system that transports large folded proteins containing a characteristic twin-arginine motif in their signal peptide across membranes. Together with TatC, TatB is part of a receptor directly interacting with Tat signal peptides. TatB may form an oligomeric binding site that transiently accommodates folded Tat precursor proteins before their translocation. The polypeptide is Sec-independent protein translocase protein TatB (Chelativorans sp. (strain BNC1)).